We begin with the raw amino-acid sequence, 429 residues long: Ubiquinone hydroxylase UbiL (429 aa).

Positions 1–22 are disordered; it reads MSEPLLRGLAAGDPPSATGPVT.

The protein belongs to the UbiH/COQ6 family. FAD serves as cofactor.

It carries out the reaction a 2-(all-trans-polyprenyl)phenol + NADPH + O2 + H(+) = a 3-(all-trans-polyprenyl)benzene-1,2-diol + NADP(+) + H2O. Its pathway is cofactor biosynthesis; ubiquinone biosynthesis. Its function is as follows. Catalyzes the hydroxylation of two positions of the aromatic ring during ubiquinone biosynthesis. The sequence is that of Ubiquinone hydroxylase UbiL from Rhodospirillum rubrum (strain ATCC 11170 / ATH 1.1.1 / DSM 467 / LMG 4362 / NCIMB 8255 / S1).